Consider the following 108-residue polypeptide: Protein phosphatase 1 regulatory subunit 1C (108 aa).

A disordered region spans residues Ala25 to His108. Residues Asn45–Val54 show a composition bias toward basic and acidic residues. Over residues Thr55–Tyr73 the composition is skewed to polar residues. Basic and acidic residues predominate over residues Ala99–His108.

This sequence belongs to the protein phosphatase inhibitor 1 family.

It is found in the cytoplasm. Functionally, may increase cell susceptibility to TNF-induced apoptosis. This Mus musculus (Mouse) protein is Protein phosphatase 1 regulatory subunit 1C (Ppp1r1c).